We begin with the raw amino-acid sequence, 600 residues long: Netrin-1 (600 aa).

Positions 1-24 (MMRAMWEALAALAAVSCLVGAVRG) are cleaved as a signal peptide. In terms of domain architecture, Laminin N-terminal spans 47–284 (HPRRCIPDFV…AVSDLQVGGR (238 aa)). N95, N116, and N131 each carry an N-linked (GlcNAc...) asparagine glycan. Cystine bridges form between C119/C152, C285/C294, C287/C304, C306/C315, C318/C338, C341/C350, C343/C368, C371/C380, C383/C401, C404/C416, C406/C423, C425/C434, C437/C451, and C472/C544. 3 Laminin EGF-like domains span residues 285-340 (CKCN…ECVA), 341-403 (CNCN…ACKA), and 404-453 (CDCH…PCIK). N417 is a glycosylation site (N-linked (GlcNAc...) asparagine). Positions 472–600 (CDSYCKASKG…KFQQREKKEL (129 aa)) constitute an NTR domain. The short motif at 530-532 (RGD) is the Cell attachment site element.

In terms of assembly, binds to its receptors; DCC, UNC5A, UNC5B, UNC5C and probably UNC5D. Binds to its receptor; DSCAM. Interacts with APP.

It localises to the secreted. The protein resides in the cytoplasm. Functionally, netrins control guidance of CNS commissural axons and peripheral motor axons. Its association with either DCC or some UNC5 receptors will lead to axon attraction or repulsion, respectively. Binding to UNC5C might cause dissociation of UNC5C from polymerized TUBB3 in microtubules and thereby lead to increased microtubule dynamics and axon repulsion. Involved in dorsal root ganglion axon projection towards the spinal cord. It also serves as a survival factor via its association with its receptors which prevent the initiation of apoptosis. Involved in colorectal tumorigenesis by regulating apoptosis. The polypeptide is Netrin-1 (NTN1) (Sus scrofa (Pig)).